A 440-amino-acid polypeptide reads, in one-letter code: UDP-N-acetylmuramoylalanine--D-glutamate ligase (440 aa).

109-115 (GTNGKTT) serves as a coordination point for ATP.

It belongs to the MurCDEF family.

It is found in the cytoplasm. It carries out the reaction UDP-N-acetyl-alpha-D-muramoyl-L-alanine + D-glutamate + ATP = UDP-N-acetyl-alpha-D-muramoyl-L-alanyl-D-glutamate + ADP + phosphate + H(+). It participates in cell wall biogenesis; peptidoglycan biosynthesis. In terms of biological role, cell wall formation. Catalyzes the addition of glutamate to the nucleotide precursor UDP-N-acetylmuramoyl-L-alanine (UMA). The chain is UDP-N-acetylmuramoylalanine--D-glutamate ligase from Rubrobacter xylanophilus (strain DSM 9941 / JCM 11954 / NBRC 16129 / PRD-1).